We begin with the raw amino-acid sequence, 426 residues long: Enolase (426 aa).

Gln-165 contacts (2R)-2-phosphoglycerate. Glu-207 (proton donor) is an active-site residue. Residues Asp-244, Glu-285, and Asp-312 each contribute to the Mg(2+) site. The (2R)-2-phosphoglycerate site is built by Lys-337, Arg-366, Ser-367, and Lys-388. The active-site Proton acceptor is Lys-337.

This sequence belongs to the enolase family. The cofactor is Mg(2+).

Its subcellular location is the cytoplasm. The protein resides in the secreted. It localises to the cell surface. The catalysed reaction is (2R)-2-phosphoglycerate = phosphoenolpyruvate + H2O. It functions in the pathway carbohydrate degradation; glycolysis; pyruvate from D-glyceraldehyde 3-phosphate: step 4/5. Catalyzes the reversible conversion of 2-phosphoglycerate (2-PG) into phosphoenolpyruvate (PEP). It is essential for the degradation of carbohydrates via glycolysis. In Thermosynechococcus vestitus (strain NIES-2133 / IAM M-273 / BP-1), this protein is Enolase.